Here is a 217-residue protein sequence, read N- to C-terminus: MTAPLTLALSKGRIFEETLPLLAAAGVQVTEDPETSRKLILPTTNPDLRVIIVRASDVPTYVEYGAADFGVAGKDVLVEHGGSGLYQPIDLNIARCRMSVAVSAGFDYASAVRQGARLRVATKYVETAREHFAAKGVHVDLIKLYGSMELAPLVGLADAIVDLVSSGGTLKANNLVEVEEIMAISSRLVVNQAALKLKRAALKPILDAFERASQNGG.

Belongs to the ATP phosphoribosyltransferase family. Short subfamily. Heteromultimer composed of HisG and HisZ subunits.

The protein localises to the cytoplasm. The enzyme catalyses 1-(5-phospho-beta-D-ribosyl)-ATP + diphosphate = 5-phospho-alpha-D-ribose 1-diphosphate + ATP. The protein operates within amino-acid biosynthesis; L-histidine biosynthesis; L-histidine from 5-phospho-alpha-D-ribose 1-diphosphate: step 1/9. Catalyzes the condensation of ATP and 5-phosphoribose 1-diphosphate to form N'-(5'-phosphoribosyl)-ATP (PR-ATP). Has a crucial role in the pathway because the rate of histidine biosynthesis seems to be controlled primarily by regulation of HisG enzymatic activity. This is ATP phosphoribosyltransferase from Burkholderia orbicola (strain MC0-3).